The primary structure comprises 379 residues: Chaperone protein DnaJ (379 aa).

In terms of domain architecture, J spans 5-70; it reads DYYEVLGVGK…EKKAAYDQYG (66 aa). The segment at 139–217 adopts a CR-type zinc-finger fold; the sequence is GHEAQIRVPH…CHGQGKLKSQ (79 aa). Zn(2+) contacts are provided by Cys-152, Cys-155, Cys-169, Cys-172, Cys-191, Cys-194, Cys-205, and Cys-208. CXXCXGXG motif repeat units follow at residues 152–159, 169–176, 191–198, and 205–212; these read CDHCHGNG, CPTCHGAG, CPKCHGSG, and CTKCHGQG. A disordered region spans residues 356–379; it reads VHEGGSRHSPQEQSWLDKVKSFFS.

This sequence belongs to the DnaJ family. As to quaternary structure, homodimer. Zn(2+) is required as a cofactor.

The protein localises to the cytoplasm. Participates actively in the response to hyperosmotic and heat shock by preventing the aggregation of stress-denatured proteins and by disaggregating proteins, also in an autonomous, DnaK-independent fashion. Unfolded proteins bind initially to DnaJ; upon interaction with the DnaJ-bound protein, DnaK hydrolyzes its bound ATP, resulting in the formation of a stable complex. GrpE releases ADP from DnaK; ATP binding to DnaK triggers the release of the substrate protein, thus completing the reaction cycle. Several rounds of ATP-dependent interactions between DnaJ, DnaK and GrpE are required for fully efficient folding. Also involved, together with DnaK and GrpE, in the DNA replication of plasmids through activation of initiation proteins. This is Chaperone protein DnaJ from Cupriavidus pinatubonensis (strain JMP 134 / LMG 1197) (Cupriavidus necator (strain JMP 134)).